We begin with the raw amino-acid sequence, 729 residues long: Polyribonucleotide nucleotidyltransferase (729 aa).

Mg(2+)-binding residues include aspartate 510 and aspartate 516. Residues 576–635 enclose the KH domain; that stretch reads PRVISVKIPVDKIGEVIGPKGKMINQIQADSGAEITVEDDGTIYIGAADGTSAETARSAI. An S1 motif domain is found at 647–719; the sequence is GERYLGTIVK…ARGKISLSPS (73 aa).

The protein belongs to the polyribonucleotide nucleotidyltransferase family. Mg(2+) is required as a cofactor.

Its subcellular location is the cytoplasm. It catalyses the reaction RNA(n+1) + phosphate = RNA(n) + a ribonucleoside 5'-diphosphate. Functionally, involved in mRNA degradation. Catalyzes the phosphorolysis of single-stranded polyribonucleotides processively in the 3'- to 5'-direction. The sequence is that of Polyribonucleotide nucleotidyltransferase from Frankia alni (strain DSM 45986 / CECT 9034 / ACN14a).